We begin with the raw amino-acid sequence, 664 residues long: Intraflagellar transport protein 70B (664 aa).

7 TPR repeats span residues 11 to 44 (DGEFTAVVYRLIRDSRYSEAVQLLSAELQRSSRS), 45 to 78 (RAGLSLLAYCYYRLQEFELAAECYEQLSQMHPEL), 153 to 186 (YDGQINLGCLLYKEGHYEAACSKFLAALQASGYQ), 188 to 220 (DLSYNLALAYYSSRQYAPALKHIADIIERGIRQ), 385 to 418 (LTEQLRKLTIQVQDSRHSRDDESAKKAVNEYDET), 423 to 456 (IPVLMAQAKIYWNFENYPMVEKIFRKSVEFCNDH), and 458 to 491 (VWKLNVAHVLFMQENKYKEAIGFYEPIVKKNYDN). Residues 507–534 (YIMTSQNEEAEELMRKIEKEEEQLSYGD) adopt a coiled-coil conformation. The TPR 8 repeat unit spans residues 543 to 576 (CIVNLVIGTLYCAKGNYDFGISRVIKSLEPYHKK).

It belongs to the TTC30/dfy-1/fleer family. As to quaternary structure, interacts with the IFT B complex components IFT27, IFT46, IFT74, IFT52, IFT57, IFT80, IFT81 and IFT88. Interacts with KIF17.

It localises to the cell projection. Its subcellular location is the cilium. Required for polyglutamylation of axonemal tubulin. Plays a role in anterograde intraflagellar transport (IFT), the process by which cilia precursors are transported from the base of the cilium to the site of their incorporation at the tip. The protein is Intraflagellar transport protein 70B (Ift70b) of Mus musculus (Mouse).